The primary structure comprises 103 residues: Large ribosomal subunit protein bL21 (103 aa).

This sequence belongs to the bacterial ribosomal protein bL21 family. Part of the 50S ribosomal subunit. Contacts protein L20.

In terms of biological role, this protein binds to 23S rRNA in the presence of protein L20. This Actinobacillus succinogenes (strain ATCC 55618 / DSM 22257 / CCUG 43843 / 130Z) protein is Large ribosomal subunit protein bL21.